Consider the following 369-residue polypeptide: tRNA pseudouridine synthase D (369 aa).

D80 acts as the Nucleophile in catalysis. Positions 156–318 (GIPNWFGEQR…LKQERRALRL (163 aa)) constitute a TRUD domain.

This sequence belongs to the pseudouridine synthase TruD family.

The catalysed reaction is uridine(13) in tRNA = pseudouridine(13) in tRNA. In terms of biological role, responsible for synthesis of pseudouridine from uracil-13 in transfer RNAs. The sequence is that of tRNA pseudouridine synthase D from Xanthomonas axonopodis pv. citri (strain 306).